A 103-amino-acid chain; its full sequence is Astacin-like peptidase p16 (103 aa).

One can recognise a Peptidase M12A domain in the interval 1-103 (NAIPGQHYRW…DAFSRDGSPM (103 aa)).

Zn(2+) serves as cofactor.

Functionally, active against casein. Has a role as a digestive enzyme. In Argiope aurantia (Black-and-yellow garden spider), this protein is Astacin-like peptidase p16.